Here is a 491-residue protein sequence, read N- to C-terminus: Serine/threonine-protein kinase 33 (491 aa).

Positions 51–89 are disordered; sequence FASQERKKERNTSRESSLKDLSIRTSNVERKPQAQWSRS. The span at 54–82 shows a compositional bias: basic and acidic residues; that stretch reads QERKKERNTSRESSLKDLSIRTSNVERKP. One can recognise a Protein kinase domain in the interval 111–377; that stretch reads YTFGRILGQG…AKELLDNQWL (267 aa). ATP-binding positions include 117-125 and K140; that span reads LGQGSFGMV. The Proton acceptor role is filled by D233. Residues 398 to 491 form a disordered region; it reads KNNPESDEET…TTLFRGKKRL (94 aa). The span at 402 to 414 shows a compositional bias: acidic residues; it reads ESDEETNTDEETE. Position 403 is a phosphoserine (S403). The span at 415 to 431 shows a compositional bias: polar residues; the sequence is QSAVYSPSANTAKQPTN. A compositionally biased stretch (low complexity) spans 445–457; the sequence is SSNSSSSKLLSAE. The span at 475–484 shows a compositional bias: polar residues; sequence AKTTLKSTTL.

It belongs to the protein kinase superfamily. CAMK Ser/Thr protein kinase family. CaMK subfamily. As to quaternary structure, homodimer. In terms of processing, autophosphorylated. In terms of tissue distribution, highly expressed in testis, particularly in cells from the spermatogenic epithelia. Present in meiotic and post meiotic sperm cells. Significant expression is detected in lung epithelia, alveolar macrophages, horizontal cells in the retina and in embryonic organs such as heart, brain and spinal cord. Also expressed in pituitary gland, kidney, pancreas, trachea and thyroid gland.

Its subcellular location is the cytoplasm. The protein resides in the cytoskeleton. It localises to the perinuclear region. It carries out the reaction L-seryl-[protein] + ATP = O-phospho-L-seryl-[protein] + ADP + H(+). The catalysed reaction is L-threonyl-[protein] + ATP = O-phospho-L-threonyl-[protein] + ADP + H(+). Its activity is regulated as follows. Specifically inhibited by CDD-2807 ((3-([1,1'-Biphenyl]-2-ylethynyl)-1H-indazol-5-yl)(2,6-diazaspiro[3.5]nonan-2-yl)methanone). CDD-2807 is a potential male contraceptive drug: it is not toxic, efficiently crosses the blood-testis barrier and induces a reversible contraceptive effect in male mice. Its function is as follows. Serine/threonine protein kinase required for spermatid differentiation and male fertility. Promotes sperm flagella assembly during spermatogenesis by mediating phosphorylation of fibrous sheath proteins AKAP3 and AKAP4. Also phosphorylates vimentin/VIM, thereby regulating the dynamic behavior of the intermediate filament cytoskeleton. This chain is Serine/threonine-protein kinase 33, found in Mus musculus (Mouse).